Consider the following 566-residue polypeptide: FAD-dependent monooxygenase asqG (566 aa).

Residues 1 to 19 (MAAFTVIIIGGSISGLTLA) form the signal peptide. FAD is bound by residues glutamate 33, valine 47, arginine 113, aspartate 313, and alanine 326. The next 2 helical transmembrane spans lie at 448–468 (ASST…GAVW) and 482–502 (GYTL…ASAV).

The protein belongs to the paxM FAD-dependent monooxygenase family. FAD serves as cofactor.

Its subcellular location is the membrane. The enzyme catalyses [(1'E)-3'-hydroxy-3',7'-dimethylocta-1',6'-dien-1'-yl]-quinolinone B + NADPH + O2 + H(+) = [(1'E)-5'-(3',3'-dimethyloxiran-2'-yl)-3'-hydroxy-3'-methylpent-1'-en-1'-yl]-quinolinone B + NADP(+) + H2O. It functions in the pathway secondary metabolite biosynthesis. It participates in alkaloid biosynthesis. Its pathway is mycotoxin biosynthesis. Its function is as follows. FAD-dependent monooxygenase; part of the gene cluster that mediates the biosynthesis of the aspoquinolone mycotoxins. Within the pathway, the FAD-dependent monooxygenase asqG catalyzes the epoxidation of the terminal C7'-C8' olefin to produce the intermediate [(1'E)-5'-(3',3'-dimethyloxiran-2'-yl)-3'-hydroxy-3'-methylpent-1'-en-1'-yl]-quinolinone B. The first step of the pathway is catalyzed by the nonribosomal peptide synthetase asqK that condenses anthranilic acid and O-methyl-L-tyrosine to produce 4'-methoxycyclopeptin. 4'-methoxycyclopeptin is then converted to 4'-methoxydehydrocyclopeptin by the ketoglutarate-dependent dioxygenase asqJ. AsqJ also converts its first product 4'-methoxydehydrocyclopeptin to 4'-methoxycyclopenin. The following conversion of 4'-methoxycyclopenin into 4'-methoxyviridicatin is catalyzed by the cyclopenase asqI. 4'-methoxyviridicatin is the precursor of quinolone natural products, and is further converted to quinolinone B. The prenyltransferase asqH1 then catalyzes the canonical Friedel-Crafts alkylation of quinolinone B with dimethylallyl cation to yield dimethylallyl quinolone, which is subjected to FAD-dependent dehydrogenation by the FAD-linked oxidoreductase asqF to yield conjugated aryl diene. The delta(3') double bond then serves as the site of the second alkylation with DMAPP catalyzed by the prenyltransferase asqH2 to yield a carbenium ion intermediate, which can be attacked by H(2)O to yield a styrenyl quinolone containing a C3'-hydroxyprenyl chain. The FAD-dependent monooxygenase asqG performs epoxidation of the terminal C7'-C8' olefin. Finally, after dehydratation of the epoxide at C3 by asqC, the quinolone epoxide rearrangement protein asqO catalyzes an enzymatic 3-exo-tet cyclization to yield the cyclopropyl-THF ring system in aspoquinolone. The sequence is that of FAD-dependent monooxygenase asqG from Emericella nidulans (strain FGSC A4 / ATCC 38163 / CBS 112.46 / NRRL 194 / M139) (Aspergillus nidulans).